The sequence spans 288 residues: Type II restriction enzyme DpnII (288 aa).

The protein belongs to the DpnII type II restriction endonuclease family. Homodimer.

It catalyses the reaction Endonucleolytic cleavage of DNA to give specific double-stranded fragments with terminal 5'-phosphates.. Functionally, a P subtype restriction enzyme that recognizes the double-stranded unmethylated sequence 5'-GATC-3' and cleaves before G-1. The chain is Type II restriction enzyme DpnII from Streptococcus pneumoniae.